We begin with the raw amino-acid sequence, 273 residues long: Putative peptidyl-prolyl cis-trans isomerase Cbf2 (273 aa).

The N-terminal stretch at 1–21 (MKKFSLVAATLIAGVVLNVNA) is a signal peptide. The PpiC domain occupies 131 to 228 (PARVQAKHIL…FGYHVILKEN (98 aa)).

The catalysed reaction is [protein]-peptidylproline (omega=180) = [protein]-peptidylproline (omega=0). This chain is Putative peptidyl-prolyl cis-trans isomerase Cbf2 (cbf2), found in Campylobacter jejuni subsp. jejuni serotype O:2 (strain ATCC 700819 / NCTC 11168).